The sequence spans 486 residues: Shugoshin-1 (486 aa).

Residues 71–154 (IEVSRVELQK…QNRAKILEKK (84 aa)) are a coiled coil. 6 disordered regions span residues 137-163 (MSKT…CAPT), 187-209 (YTSC…RKSE), 222-251 (HSCR…ARLN), 323-346 (AGSS…PRKS), 382-403 (PIQH…DPGP), and 418-467 (TVAP…SRRA). Basic and acidic residues predominate over residues 331 to 346 (EAHKFDIEDPEPPRKS). The segment covering 387–396 (QKRKLSRRKS) has biased composition (basic residues). Over residues 423 to 433 (APSSSNALIEQ) the composition is skewed to polar residues.

It belongs to the shugoshin family. As to expression, highly expressed in roots. Expressed in panicles. Expressed at low levels in leaves.

Its subcellular location is the nucleus. It localises to the nucleolus. The protein resides in the chromosome. It is found in the centromere. Its function is as follows. Plays a central role in chromosome cohesion during meiosis I by preventing premature dissociation of cohesin complex from centromeres after prophase, when most of cohesin complex dissociates from chromosomes arms. Required for the timely assembly and maintenance of synaptonemal complex (SC) during early prophase I. Required for maintenance of centromeric cohesion before prophase II and correct segregation of chromatids during meiosis II. Has apparently no function in mitosis. The protein is Shugoshin-1 of Oryza sativa subsp. japonica (Rice).